The sequence spans 486 residues: Vacuolar-processing enzyme beta-isozyme (486 aa).

The signal sequence occupies residues 1–21; it reads MAKSCYFRPALLLLLVLLVHA. Residue H169 is part of the active site. Residue C211 is the Nucleophile of the active site. C244 and C258 are disulfide-bonded. N309 carries an N-linked (GlcNAc...) asparagine glycan. 2 disulfide bridges follow: C420/C450 and C432/C467.

This sequence belongs to the peptidase C13 family. Auto-catalytic activation. Seed specific. Also expressed in the flowers and buds.

Its subcellular location is the vacuole. It is found in the protein storage vacuole. The enzyme catalyses Hydrolysis of proteins and small molecule substrates at -Asn-|-Xaa- bonds.. Asparagine-specific endopeptidase involved in the processing of vacuolar seed protein precursors into the mature forms. Probably involved in post-translational proteolysis of seed storage proteins in the protein storage vacuole of developing seeds. This is Vacuolar-processing enzyme beta-isozyme from Arabidopsis thaliana (Mouse-ear cress).